We begin with the raw amino-acid sequence, 33 residues long: Photosystem II reaction center protein Psb30 (33 aa).

Residues 5–25 (VLAQLTVLTLIVISGPLVIAL) traverse the membrane as a helical segment.

This sequence belongs to the Psb30/Ycf12 family. As to quaternary structure, PSII is composed of 1 copy each of membrane proteins PsbA, PsbB, PsbC, PsbD, PsbE, PsbF, PsbH, PsbI, PsbJ, PsbK, PsbL, PsbM, PsbT, PsbX, PsbY, PsbZ, Psb30/Ycf12, peripheral proteins of the oxygen-evolving complex and a large number of cofactors. It forms dimeric complexes.

The protein resides in the plastid. Its subcellular location is the chloroplast thylakoid membrane. In terms of biological role, a core subunit of photosystem II (PSII), probably helps stabilize the reaction center. This is Photosystem II reaction center protein Psb30 from Cycas taitungensis (Prince sago).